Here is a 261-residue protein sequence, read N- to C-terminus: Thiamine thiazole synthase (261 aa).

Residues Ser-33, 52–53 (ER), Gly-60, Val-124, and 152–154 (HVD) contribute to the NAD(+) site. Fe cation is bound by residues Asp-154 and His-169. Met-219 is an NAD(+) binding site. Arg-229 is a glycine binding site.

It belongs to the THI4 family. As to quaternary structure, homooctamer; tetramer of dimers. Fe(2+) serves as cofactor.

The catalysed reaction is hydrogen sulfide + glycine + NAD(+) = ADP-5-ethyl-4-methylthiazole-2-carboxylate + nicotinamide + 3 H2O + H(+). Its pathway is cofactor biosynthesis; thiamine diphosphate biosynthesis. Involved in the biosynthesis of the thiazole moiety of thiamine. Catalyzes the conversion of NAD and glycine to adenosine diphosphate 5-(2-hydroxyethyl)-4-methylthiazole-2-carboxylate (ADT), an adenylated thiazole intermediate, using free sulfide as a source of sulfur. This is Thiamine thiazole synthase from Pyrobaculum arsenaticum (strain DSM 13514 / JCM 11321 / PZ6).